Here is a 176-residue protein sequence, read N- to C-terminus: Vitamin K epoxide reductase complex subunit 1-like protein 1 (176 aa).

Over 1–13 (MAAPVLLRVSVPR) the chain is Cytoplasmic. A helical membrane pass occupies residues 14-36 (WERVARYAVCAAGILLSIYAYHV). The Lumenal portion of the chain corresponds to 37–87 (EREKERDPEHRALCDLGPWVKCSAALASRWGRGFGLLGSIFGKDGVLNQPN). The cysteines at positions 50 and 58 are disulfide-linked. Residue N87 participates in (S)-warfarin binding. Residues 88-102 (SVFGLIFYILQLLLG) traverse the membrane as a helical segment. The Cytoplasmic portion of the chain corresponds to 103-107 (MTASA). Residues 108–135 (VAALILMTSSIMSVVGSLYLAYILYFVL) traverse the membrane as a helical segment. Topologically, residues 136 to 138 (KEF) are lumenal. C139 and C142 form a disulfide bridge. The helical transmembrane segment at 139–160 (CIICIVTYVLNFLLLIINYKRL) threads the bilayer. The phylloquinone site is built by C142 and Y146. Residue Y146 participates in (S)-warfarin binding. The Cytoplasmic segment spans residues 161 to 176 (VYLNEAWKRQLQPKQD).

Belongs to the VKOR family.

The protein resides in the endoplasmic reticulum membrane. The enzyme catalyses phylloquinone + [protein]-disulfide + H2O = 2,3-epoxyphylloquinone + [protein]-dithiol. The catalysed reaction is phylloquinol + [protein]-disulfide = phylloquinone + [protein]-dithiol. Its activity is regulated as follows. Inhibited by warfarin (coumadin). Warfarin locks VKORC1 in both redox states into the closed conformation. Functionally, involved in vitamin K metabolism. Can reduce inactive vitamin K 2,3-epoxide to active vitamin K, and may contribute to vitamin K-mediated protection against oxidative stress. Plays a role in vitamin K-dependent gamma-carboxylation of Glu residues in target proteins. This chain is Vitamin K epoxide reductase complex subunit 1-like protein 1 (VKORC1L1), found in Homo sapiens (Human).